A 492-amino-acid chain; its full sequence is Dipeptide permease D (492 aa).

Transmembrane regions (helical) follow at residues 14 to 34, 49 to 69, 91 to 111, 138 to 158, 167 to 187, 212 to 232, 236 to 256, 269 to 289, 312 to 332, 344 to 364, 379 to 399, 413 to 433, and 458 to 478; these read VVALQIWEYFSFYGMRALLIL, ALFSAYCSLVYVTPILGGYLA, LVLGASETAPVFLYLSLAIIV, GGFSLMYAAGNIGSIIAPIAC, WAMGFALAAIGMVAGLVIFLC, NWGWLLVLLVTAPLLIAVLFW, SVYALIVATVIGLAVLARIYL, LIVVLTAFSLLFWAFAQQGGS, MFQSVNAFAVMLCGMVLAWLV, IWGKFALGLGLMSAGFCILTL, LMVLGLAVMGFAELFIDPVAM, VLTGIYMLLSGAIANYLAGVI, and VFSQITWGALACVGVVLVIWL.

The protein belongs to the major facilitator superfamily. Proton-dependent oligopeptide transporter (POT/PTR) (TC 2.A.17) family. DtpD subfamily.

It localises to the cell inner membrane. Functionally, probable proton-dependent permease that transports dipeptides. This chain is Dipeptide permease D, found in Klebsiella pneumoniae (strain 342).